The sequence spans 326 residues: tRNA N6-adenosine threonylcarbamoyltransferase (326 aa).

2 residues coordinate Fe cation: His-111 and His-115. Residues 134 to 138 (TVSGG), Asp-167, Gly-180, Asp-184, and Asn-268 each bind substrate. Asp-293 provides a ligand contact to Fe cation.

Belongs to the KAE1 / TsaD family. Fe(2+) is required as a cofactor.

Its subcellular location is the cytoplasm. It carries out the reaction L-threonylcarbamoyladenylate + adenosine(37) in tRNA = N(6)-L-threonylcarbamoyladenosine(37) in tRNA + AMP + H(+). Required for the formation of a threonylcarbamoyl group on adenosine at position 37 (t(6)A37) in tRNAs that read codons beginning with adenine. Is involved in the transfer of the threonylcarbamoyl moiety of threonylcarbamoyl-AMP (TC-AMP) to the N6 group of A37, together with TsaE and TsaB. TsaD likely plays a direct catalytic role in this reaction. This is tRNA N6-adenosine threonylcarbamoyltransferase from Dehalococcoides mccartyi (strain ATCC BAA-2100 / JCM 16839 / KCTC 5957 / BAV1).